Consider the following 454-residue polypeptide: Tol-Pal system protein TolB (454 aa).

The first 21 residues, 1-21 (MSLRPISLMLALLLTSAPALA), serve as a signal peptide directing secretion.

This sequence belongs to the TolB family. The Tol-Pal system is composed of five core proteins: the inner membrane proteins TolA, TolQ and TolR, the periplasmic protein TolB and the outer membrane protein Pal. They form a network linking the inner and outer membranes and the peptidoglycan layer.

It localises to the periplasm. Part of the Tol-Pal system, which plays a role in outer membrane invagination during cell division and is important for maintaining outer membrane integrity. The sequence is that of Tol-Pal system protein TolB from Sphingopyxis alaskensis (strain DSM 13593 / LMG 18877 / RB2256) (Sphingomonas alaskensis).